A 142-amino-acid polypeptide reads, in one-letter code: MVLSDANKQEIHHVAELIKPHAEAVGADALARLFELHPQTKTYFPNFSGYHATDAPVKAHGAKVINAVLKAAEHLDDLPKHLEKLATKHGHELLVDPHNFVLFSDIIVVTLATKLPTFSPATHRAIDKFLEELVHQLSSKYR.

The region spanning 2–142 (VLSDANKQEI…LVHQLSSKYR (141 aa)) is the Globin domain. Residue His60 coordinates O2. Position 89 (His89) interacts with heme b.

It belongs to the globin family. Heterotetramer of two alpha chains and two beta chains. As to expression, red blood cells.

Functionally, involved in oxygen transport from gills to the various peripheral tissues. The polypeptide is Hemoglobin subunit alpha (HBA) (Bathyraja eatonii (Eaton's skate)).